The chain runs to 303 residues: MNVLPVVGRFAPSPTGAMHLGNARTALLAWLHSRALGGLHLLRFEDLDTGRVRSWAYDTTRRDLEWLGLDWDAEFRQSERLPVYADAVSRLTAAGETYPCTCTRREIRQAIEDSAGAPHGHEPVYPGTCRLHGAMPGRPAALRWHVPDGTVCVTDALTCATLCQNLPAEVGDFVLRRNDGVYAYHLAVVVDDALMGVTDVVRGADLWTATPRQVALGRALGSAPPRYLHVPLMTDFRGERLAKRGGAPPLRALREGGEEAGRVLSALARSLGWAVPERVSAAELLPLWRAQLTRAGFFINPQS.

Residues 9–13 (RFAPS) and E45 each bind L-glutamate. A 'HIGH' region motif is present at residues 12-22 (PSPTGAMHLGN). Positions 100, 102, 125, and 129 each coordinate Zn(2+). Positions 184 and 202 each coordinate L-glutamate. Positions 240-244 (RLAKR) match the 'KMSKS' region motif. Position 243 (K243) interacts with ATP.

Belongs to the class-I aminoacyl-tRNA synthetase family. GluQ subfamily. Zn(2+) serves as cofactor.

Catalyzes the tRNA-independent activation of glutamate in presence of ATP and the subsequent transfer of glutamate onto a tRNA(Asp). Glutamate is transferred on the 2-amino-5-(4,5-dihydroxy-2-cyclopenten-1-yl) moiety of the queuosine in the wobble position of the QUC anticodon. In Deinococcus geothermalis (strain DSM 11300 / CIP 105573 / AG-3a), this protein is Glutamyl-Q tRNA(Asp) synthetase.